The sequence spans 157 residues: S-ribosylhomocysteine lyase (157 aa).

Fe cation-binding residues include His-54, His-58, and Cys-124.

This sequence belongs to the LuxS family. In terms of assembly, homodimer. The cofactor is Fe cation.

It catalyses the reaction S-(5-deoxy-D-ribos-5-yl)-L-homocysteine = (S)-4,5-dihydroxypentane-2,3-dione + L-homocysteine. Its function is as follows. Involved in the synthesis of autoinducer 2 (AI-2) which is secreted by bacteria and is used to communicate both the cell density and the metabolic potential of the environment. The regulation of gene expression in response to changes in cell density is called quorum sensing. Catalyzes the transformation of S-ribosylhomocysteine (RHC) to homocysteine (HC) and 4,5-dihydroxy-2,3-pentadione (DPD). The sequence is that of S-ribosylhomocysteine lyase from Levilactobacillus brevis (strain ATCC 367 / BCRC 12310 / CIP 105137 / JCM 1170 / LMG 11437 / NCIMB 947 / NCTC 947) (Lactobacillus brevis).